The chain runs to 303 residues: Quinolinate synthase (303 aa).

The iminosuccinate site is built by His-25 and Ser-42. A [4Fe-4S] cluster-binding site is contributed by Cys-87. Residues 113-115 (YVN) and Ser-130 contribute to the iminosuccinate site. Cys-173 contacts [4Fe-4S] cluster. Residues 199 to 201 (HPE) and Thr-216 contribute to the iminosuccinate site. [4Fe-4S] cluster is bound at residue Cys-261.

The protein belongs to the quinolinate synthase family. Type 2 subfamily. It depends on [4Fe-4S] cluster as a cofactor.

Its subcellular location is the cytoplasm. The catalysed reaction is iminosuccinate + dihydroxyacetone phosphate = quinolinate + phosphate + 2 H2O + H(+). It participates in cofactor biosynthesis; NAD(+) biosynthesis; quinolinate from iminoaspartate: step 1/1. Its function is as follows. Catalyzes the condensation of iminoaspartate with dihydroxyacetone phosphate to form quinolinate. This chain is Quinolinate synthase, found in Desulforudis audaxviator (strain MP104C).